A 639-amino-acid chain; its full sequence is Polypeptide N-acetylgalactosaminyltransferase 15 (639 aa).

Topologically, residues 1–11 are cytoplasmic; that stretch reads MLLRKRYRHRP. Residues 12–34 form a helical; Signal-anchor for type II membrane protein membrane-spanning segment; the sequence is CRLQFLLLLLMLGCVLMMVAMLH. At 35 to 639 the chain is on the lumenal side; sequence PPHHTLHQTV…FDQINAVDER (605 aa). The segment at 106–155 is disordered; the sequence is RNQSQGRRGGSYRLIKQPRRQDKEAPKRDWGADEDGEVSEEEELTPFSLD. Residue Asn-107 is glycosylated (N-linked (GlcNAc...) asparagine). Basic and acidic residues predominate over residues 124–136; it reads RRQDKEAPKRDWG. Residues 137–149 show a composition bias toward acidic residues; it reads ADEDGEVSEEEEL. 5 cysteine pairs are disulfide-bonded: Cys-181/Cys-412, Cys-403/Cys-482, Cys-517/Cys-536, Cys-562/Cys-575, and Cys-603/Cys-620. Positions 190 to 299 are catalytic subdomain A; it reads LPTASVILCF…PGWLEPLLSR (110 aa). Substrate is bound by residues Asp-231 and Arg-260. Asp-283, His-285, and His-417 together coordinate Mn(2+). The segment at 358–420 is catalytic subdomain B; that stretch reads PIRSPVVPGE…PCSRVGHIYQ (63 aa). Positions 504–631 constitute a Ricin B-type lectin domain; sequence SFSGKLHNTG…GKARQQWRFD (128 aa). The N-linked (GlcNAc...) asparagine glycan is linked to Asn-574.

This sequence belongs to the glycosyltransferase 2 family. GalNAc-T subfamily. The cofactor is Mn(2+). In terms of tissue distribution, widely expressed. Highly expressed in small intestine, placenta, spleen, cerebral cortex and ovary. Expressed at intermediate level in uterus, mammary gland, stomach, cerebellum and whole brain. Weakly expressed in fetal brain, bone marrow, thyroid gland, thymus, heart, skeletal muscle, lung, liver, colon, pancreas, kidney and testis. Not expressed in leukocyte. Expressed in both normal and osteoarthritic cartilage. Expressed at low level in chondrocytes in all zones of both normal and osteoarthritic cartilage.

The protein resides in the golgi apparatus membrane. It carries out the reaction L-seryl-[protein] + UDP-N-acetyl-alpha-D-galactosamine = a 3-O-[N-acetyl-alpha-D-galactosaminyl]-L-seryl-[protein] + UDP + H(+). The enzyme catalyses L-threonyl-[protein] + UDP-N-acetyl-alpha-D-galactosamine = a 3-O-[N-acetyl-alpha-D-galactosaminyl]-L-threonyl-[protein] + UDP + H(+). It functions in the pathway protein modification; protein glycosylation. Catalyzes the initial reaction in O-linked oligosaccharide biosynthesis, the transfer of an N-acetyl-D-galactosamine residue to a serine or threonine residue on the protein receptor. Although it displays a much weaker activity toward all substrates tested compared to GALNT2, it is able to transfer up to seven GalNAc residues to the Muc5AC peptide, suggesting that it can fill vicinal Thr/Ser residues in cooperation with other GALNT proteins. Prefers Muc1a as substrate. The sequence is that of Polypeptide N-acetylgalactosaminyltransferase 15 (GALNT15) from Homo sapiens (Human).